The sequence spans 506 residues: Glutamate--tRNA ligase (506 aa).

A 'HIGH' region motif is present at residues 24–34; that stretch reads PSPTGTPHVGL. A disordered region spans residues 124 to 147; sequence TPEEVEQRHRAKGEDPKRGYDNYD. The span at 128–147 shows a compositional bias: basic and acidic residues; that stretch reads VEQRHRAKGEDPKRGYDNYD. Residues 268-272 carry the 'KMSKS' region motif; it reads KLSKR. ATP is bound at residue K271.

This sequence belongs to the class-I aminoacyl-tRNA synthetase family. Glutamate--tRNA ligase type 1 subfamily. In terms of assembly, monomer.

Its subcellular location is the cytoplasm. It carries out the reaction tRNA(Glu) + L-glutamate + ATP = L-glutamyl-tRNA(Glu) + AMP + diphosphate. Catalyzes the attachment of glutamate to tRNA(Glu) in a two-step reaction: glutamate is first activated by ATP to form Glu-AMP and then transferred to the acceptor end of tRNA(Glu). The sequence is that of Glutamate--tRNA ligase from Kocuria rhizophila (strain ATCC 9341 / DSM 348 / NBRC 103217 / DC2201).